A 216-amino-acid chain; its full sequence is Adenylate kinase (216 aa).

Position 10–15 (10–15 (GAGKGT)) interacts with ATP. The segment at 30-59 (STGDMLRAAVKAGTKLGQQVQGIMAAGKLV) is NMP. AMP is bound by residues Thr31, Arg36, 57–59 (KLV), 85–88 (GFPR), and Gln92. Positions 122 to 159 (GRRVHMPSGRIYHLKFNPPKITDKDDMTGESLTLRKDD) are LID. ATP-binding positions include Arg123 and 132–133 (IY). 2 residues coordinate AMP: Arg156 and Arg167. Arg200 provides a ligand contact to ATP.

This sequence belongs to the adenylate kinase family. Monomer.

It localises to the cytoplasm. It catalyses the reaction AMP + ATP = 2 ADP. Its pathway is purine metabolism; AMP biosynthesis via salvage pathway; AMP from ADP: step 1/1. Catalyzes the reversible transfer of the terminal phosphate group between ATP and AMP. Plays an important role in cellular energy homeostasis and in adenine nucleotide metabolism. The sequence is that of Adenylate kinase from Hamiltonella defensa subsp. Acyrthosiphon pisum (strain 5AT).